We begin with the raw amino-acid sequence, 221 residues long: 7-cyano-7-deazaguanine synthase (221 aa).

ATP is bound at residue 10–20 (FSGGQDSTTCL). Zn(2+) is bound by residues C186, C195, C198, and C201.

This sequence belongs to the QueC family. Homodimer. Zn(2+) is required as a cofactor.

The enzyme catalyses 7-carboxy-7-deazaguanine + NH4(+) + ATP = 7-cyano-7-deazaguanine + ADP + phosphate + H2O + H(+). It participates in purine metabolism; 7-cyano-7-deazaguanine biosynthesis. Catalyzes the ATP-dependent conversion of 7-carboxy-7-deazaguanine (CDG) to 7-cyano-7-deazaguanine (preQ(0)). The chain is 7-cyano-7-deazaguanine synthase from Geobacillus sp. (strain WCH70).